The chain runs to 196 residues: Translation machinery-associated protein 22 (196 aa).

In terms of domain architecture, SUI1 spans 97 to 168 (VIVKREARTK…EVVAYIHSLL (72 aa)).

The protein belongs to the DENR family. Interacts with the 40S ribosomal subunit.

Its subcellular location is the cytoplasm. This is Translation machinery-associated protein 22 (TMA22) from Candida glabrata (strain ATCC 2001 / BCRC 20586 / JCM 3761 / NBRC 0622 / NRRL Y-65 / CBS 138) (Yeast).